The primary structure comprises 241 residues: Small ribosomal subunit protein uS10m (241 aa).

A mitochondrion-targeting transit peptide spans 1–54; sequence MIAGVLRRSSLPSRQTLSAALASFNSCISHNLTPATTGASVSSRFTLASSPNSF.

The protein belongs to the universal ribosomal protein uS10 family. As to quaternary structure, component of the mitochondrial ribosome small subunit.

Its subcellular location is the mitochondrion. The sequence is that of Small ribosomal subunit protein uS10m (RPS10) from Arabidopsis thaliana (Mouse-ear cress).